The primary structure comprises 337 residues: Ycf66-like protein (337 aa).

The interval 111 to 337 is disordered; the sequence is TEAELDQLEP…GADDQERFDY (227 aa). Residues 113–123 show a composition bias toward acidic residues; the sequence is AELDQLEPEDE. Composition is skewed to basic and acidic residues over residues 133 to 143 and 253 to 269; these read RGYDDDARSGR and FGDR…RPYE. The segment covering 304 to 316 has biased composition (polar residues); that stretch reads QSRSGNPRSQRPS.

This sequence belongs to the ycf66 family.

The polypeptide is Ycf66-like protein (Synechocystis sp. (strain ATCC 27184 / PCC 6803 / Kazusa)).